The chain runs to 211 residues: Ribonuclease HII (211 aa).

The RNase H type-2 domain occupies 11-200 (EFIAGVDEVG…VKKLLSTLLS (190 aa)). Positions 17, 18, and 109 each coordinate a divalent metal cation.

The protein belongs to the RNase HII family. The cofactor is Mn(2+). Mg(2+) is required as a cofactor.

It is found in the cytoplasm. The catalysed reaction is Endonucleolytic cleavage to 5'-phosphomonoester.. Endonuclease that specifically degrades the RNA of RNA-DNA hybrids. The polypeptide is Ribonuclease HII (Histophilus somni (strain 2336) (Haemophilus somnus)).